A 462-amino-acid chain; its full sequence is Squalene synthase LSS (462 aa).

NADP(+)-binding residues include arginine 48 and arginine 73. Positions 76, 79, and 80 each coordinate Mg(2+). Residues arginine 214, lysine 314, and arginine 316 each contribute to the NADP(+) site. The next 2 helical transmembrane spans lie at 399–419 (LVLVLGLGYCVYAFNLLPLLW) and 436–456 (LGLPHQIIAVFCVLTAGYQVF).

This sequence belongs to the phytoene/squalene synthase family. The cofactor is Mg(2+).

The protein localises to the membrane. The enzyme catalyses 2 (2E,6E)-farnesyl diphosphate + NADH + H(+) = squalene + 2 diphosphate + NAD(+). It carries out the reaction 2 (2E,6E)-farnesyl diphosphate + NADPH + H(+) = squalene + 2 diphosphate + NADP(+). Its function is as follows. Converts farnesyl diphosphate (FPP) into squalene, a precursor for sterol biosynthesis in eukaryotes. This chain is Squalene synthase LSS, found in Botryococcus braunii (Green alga).